The chain runs to 316 residues: tRNA dimethylallyltransferase (316 aa).

17–24 is an ATP binding site; sequence GPTASGKT. 19–24 contacts substrate; that stretch reads TASGKT. Interaction with substrate tRNA stretches follow at residues 42–45, 166–170, 247–252, and 280–287; these read DSAL, QRLSR, RCVGYR, and KRQITWLR.

It belongs to the IPP transferase family. Monomer. The cofactor is Mg(2+).

It catalyses the reaction adenosine(37) in tRNA + dimethylallyl diphosphate = N(6)-dimethylallyladenosine(37) in tRNA + diphosphate. In terms of biological role, catalyzes the transfer of a dimethylallyl group onto the adenine at position 37 in tRNAs that read codons beginning with uridine, leading to the formation of N6-(dimethylallyl)adenosine (i(6)A). This chain is tRNA dimethylallyltransferase, found in Shigella boydii serotype 18 (strain CDC 3083-94 / BS512).